A 305-amino-acid polypeptide reads, in one-letter code: GTP cyclohydrolase FolE2 (305 aa).

This sequence belongs to the GTP cyclohydrolase IV family.

It carries out the reaction GTP + H2O = 7,8-dihydroneopterin 3'-triphosphate + formate + H(+). It participates in cofactor biosynthesis; 7,8-dihydroneopterin triphosphate biosynthesis; 7,8-dihydroneopterin triphosphate from GTP: step 1/1. Its function is as follows. Converts GTP to 7,8-dihydroneopterin triphosphate. This is GTP cyclohydrolase FolE2 from Xanthomonas axonopodis pv. citri (strain 306).